Consider the following 237-residue polypeptide: Ribonuclease PH (237 aa).

Phosphate contacts are provided by residues Arg86 and 124–126 (GTR).

It belongs to the RNase PH family. Homohexameric ring arranged as a trimer of dimers.

It carries out the reaction tRNA(n+1) + phosphate = tRNA(n) + a ribonucleoside 5'-diphosphate. In terms of biological role, phosphorolytic 3'-5' exoribonuclease that plays an important role in tRNA 3'-end maturation. Removes nucleotide residues following the 3'-CCA terminus of tRNAs; can also add nucleotides to the ends of RNA molecules by using nucleoside diphosphates as substrates, but this may not be physiologically important. Probably plays a role in initiation of 16S rRNA degradation (leading to ribosome degradation) during starvation. In Cereibacter sphaeroides (strain KD131 / KCTC 12085) (Rhodobacter sphaeroides), this protein is Ribonuclease PH.